We begin with the raw amino-acid sequence, 304 residues long: Probable actin-related protein 2/3 complex subunit 2 (304 aa).

It belongs to the ARPC2 family. Component of the Arp2/3 complex.

Its subcellular location is the cytoplasm. The protein resides in the cytoskeleton. Functionally, functions as actin-binding component of the Arp2/3 complex which is involved in regulation of actin polymerization and together with an activating nucleation-promoting factor (NPF) mediates the formation of branched actin networks. Seems to contact the mother actin filament. The sequence is that of Probable actin-related protein 2/3 complex subunit 2 (Arc-p34) from Anopheles gambiae (African malaria mosquito).